The sequence spans 286 residues: F-box/SPRY domain-containing protein 1 (286 aa).

A2 is modified (N-acetylalanine). In terms of domain architecture, F-box spans S33–L82. The region spanning L92 to L284 is the B30.2/SPRY domain.

This sequence belongs to the FBXO45/Fsn family. In terms of assembly, forms a complex with MYCBP2 and SKP1. Interacts with HEY1; leading to FBXO45 nuclear translocation. Interacts (via SPRY domain) with CDH2. Expressed speciffically in the central nervous system, including cerebellum, medulla oblongata, olfactory bulb, hippocampus, cortex and brain stem.

The protein localises to the secreted. It localises to the postsynaptic cell membrane. The protein resides in the presynaptic cell membrane. Its subcellular location is the nucleus. It functions in the pathway protein modification; protein ubiquitination. Component of E3 ubiquitin ligase complex consisting of FBXO45, MYCBP2 and SKP1. Functions in substrate recognition but plays also an important role in assembly of the complex. Required for normal neuromuscular synaptogenesis, axon pathfinding and neuronal migration. Regulates neuron migration during brain development through interaction with N-cadherin/CDH2 after secretion via a non-classical mechanism. Plays a role in the regulation of neurotransmission at mature neurons. May control synaptic activity by controlling UNC13A via ubiquitin dependent pathway. Specifically recognizes TP73, promoting its ubiquitination and degradation. Polyubiquitinates NMNAT2, an adenylyltransferase that acts as an axon maintenance factor, and regulates its stability and degradation by the proteasome. Acts also by ubiquitinating FBXW7 during prolonged mitotic arrest and promotes FBXW7 proteasomal degradation. Induces subsequently an increase in mitotic slippage and prevents mitotic cell death. In response to influenza infection, mediates interferon-lambda receptor IFNLR1 polyubiquitination and degradation through the ubiquitin-proteasome system by docking with its intracellular receptor domain. In Mus musculus (Mouse), this protein is F-box/SPRY domain-containing protein 1.